The primary structure comprises 317 residues: Melanocyte-stimulating hormone receptor (317 aa).

Over 1–37 (MPVQGSQRRLLGSLNSTPTATPHLGLAANQTGARCLE) the chain is Extracellular. N-linked (GlcNAc...) asparagine glycosylation is present at N29. Residues 38 to 63 (VSVPDGLFLSLGLVSLVENVLVVTAI) form a helical membrane-spanning segment. Topologically, residues 64 to 72 (AKNRNLHSP) are cytoplasmic. The helical transmembrane segment at 73 to 93 (MYCFICCLALSDLLVSGSNML) threads the bilayer. Residues 94-118 (ETAVTLLLEAGVLAARAAVVQQLDN) are Extracellular-facing. A helical transmembrane segment spans residues 119-140 (VIDVITCSSMLSSLCFLGAIAV). The Cytoplasmic portion of the chain corresponds to 141 to 163 (DRYISIFYALRYHSIVTLPRARR). Residues 164–183 (AVAAIWVASVLFSTLFIAYY) form a helical membrane-spanning segment. At 184-191 (DHAAVLLC) the chain is on the extracellular side. Residues 192–211 (LVIFFLAMLVLMAVLYVHML) form a helical membrane-spanning segment. Residues 212 to 240 (ARACQHAQGIARLHKRQRLAHQGFGLKGA) lie on the Cytoplasmic side of the membrane. Residues 241–266 (ATLTILLGIFFLCWGPFFLHLTLIVL) form a helical membrane-spanning segment. Residues 267 to 279 (CPQHPTCSCIFKN) are Extracellular-facing. The helical transmembrane segment at 280–300 (FNLFLALIICNAIIDPLIYAF) threads the bilayer. At 301-317 (RSQELRRTLKEVLLCSW) the chain is on the cytoplasmic side. C315 carries the S-palmitoyl cysteine lipid modification.

The protein belongs to the G-protein coupled receptor 1 family. In terms of assembly, interacts with MGRN1, but does not undergo MGRN1-mediated ubiquitination; this interaction competes with GNAS-binding and thus inhibits agonist-induced cAMP production. Interacts with OPN3; the interaction results in a decrease in MC1R-mediated cAMP signaling and ultimately a decrease in melanin production in melanocytes.

The protein resides in the cell membrane. Receptor for MSH (alpha, beta and gamma) and ACTH. The activity of this receptor is mediated by G proteins which activate adenylate cyclase. Mediates melanogenesis, the production of eumelanin (black/brown) and phaeomelanin (red/yellow), via regulation of cAMP signaling in melanocytes. This is Melanocyte-stimulating hormone receptor (MC1R) from Papio anubis (Olive baboon).